A 248-amino-acid polypeptide reads, in one-letter code: Probable capsular polysaccharide biosynthesis protein YwqC (248 aa).

A run of 2 helical transmembrane segments spans residues 18-38 and 174-194; these read ILLIMIVTAAATAAGGLISFF and LLNIAIAFAAGLAGSIGLAFL.

Belongs to the CpsC/CapA family. In terms of processing, not phosphorylated in vitro by YwqD.

Its subcellular location is the cell membrane. Its pathway is capsule biogenesis; capsule polysaccharide biosynthesis. In terms of biological role, required for YwqD kinase activity. May bring YwqD and its substrates into contact. Probably involved in the regulation of capsular polysaccharide biosynthesis. This chain is Probable capsular polysaccharide biosynthesis protein YwqC (ywqC), found in Bacillus subtilis (strain 168).